The following is a 727-amino-acid chain: Sodium-dependent neutral amino acid transporter SLC6A17 (727 aa).

Residues 1 to 69 are Cytoplasmic-facing; sequence MPKNSKVTQR…RPAWNSKLQY (69 aa). A phosphoserine mark is found at Ser13 and Ser20. Residues 70–90 traverse the membrane as a helical segment; the sequence is ILAQIGFSVGLGNIWRFPYLC. Over 91–95 the chain is Extracellular; the sequence is QKNGG. A helical membrane pass occupies residues 96–116; it reads GAYLVPYLVLLIIIGIPLFFL. Over 117–147 the chain is Cytoplasmic; sequence ELAVGQRIRRGSIGVWHYICPRLGGIGFSSC. The helical transmembrane segment at 148-168 threads the bilayer; that stretch reads IVCLFVGLYYNVIIGWSIFYF. Residues 169 to 222 lie on the Extracellular side of the membrane; sequence FKSFQYPLPWSECPVVRNGSVAVVEAECEKSSATTYFWYREALDISDSISESGG. Asn186 is a glycosylation site (N-linked (GlcNAc...) asparagine). The chain crosses the membrane as a helical span at residues 223–243; that stretch reads LNWKMTLCLLVAWSIVGMAVV. Residues 244-253 lie on the Cytoplasmic side of the membrane; that stretch reads KGIQSSGKVM. A helical transmembrane segment spans residues 254–274; that stretch reads YFSSLFPYVVLACFLVRGLLL. Over 275–300 the chain is Extracellular; that stretch reads RGAVDGILHMFTPKLDKMLDPQVWRE. A helical membrane pass occupies residues 301 to 321; it reads AATQVFFALGLGFGGVIAFSS. Residues 322–334 are Cytoplasmic-facing; it reads YNKQDNNCHFDAA. Residues 335–355 traverse the membrane as a helical segment; sequence LVSFINFFTSVLATLVVFAVL. Residues 356–460 lie on the Extracellular side of the membrane; the sequence is GFKANIMNEK…HFPASPFWSV (105 aa). Tyr377 is subject to Phosphotyrosine. Residue Asn393 is glycosylated (N-linked (GlcNAc...) asparagine). Residues 461-481 form a helical membrane-spanning segment; the sequence is MFFLMLINLGLGSMIGTMAGI. Residues 482-490 are Cytoplasmic-facing; the sequence is TTPIIDTFK. The helical transmembrane segment at 491-511 threads the bilayer; sequence VPKEMFTVGCCVFAFLVGLLF. The Extracellular segment spans residues 512–527; the sequence is VQRSGNYFVTMFDDYS. Residues 528–548 form a helical membrane-spanning segment; it reads ATLPLTLIVILENIAVAWIYG. The Cytoplasmic segment spans residues 549–573; it reads TKKFMQELTEMLGFRPYRFYFYMWK. The chain crosses the membrane as a helical span at residues 574 to 594; it reads FVSPLCMAVLTTASIIQLGVT. Topologically, residues 595–617 are extracellular; the sequence is PPGYSAWIKEEAAERYLYFPNWA. Residues 618-638 form a helical membrane-spanning segment; sequence MALLITLIVVATLPIPVVFVL. Residues 639 to 727 lie on the Cytoplasmic side of the membrane; that stretch reads RHFHLLSDGS…LLASTPESEL (89 aa). 2 positions are modified to phosphoserine: Ser665 and Ser701. Positions 680 to 727 are disordered; the sequence is VPSEAPSPMPTHRSYLGPGSTSPLETSGNPNGRYGSGYLLASTPESEL. Positions 698 to 709 are enriched in polar residues; that stretch reads GSTSPLETSGNP.

The protein belongs to the sodium:neurotransmitter symporter (SNF) (TC 2.A.22) family.

The protein localises to the cytoplasmic vesicle. It is found in the secretory vesicle. The protein resides in the synaptic vesicle membrane. Its subcellular location is the postsynapse. It localises to the presynapse. It catalyses the reaction L-proline(in) + Na(+)(in) = L-proline(out) + Na(+)(out). The enzyme catalyses L-leucine(in) + Na(+)(in) = L-leucine(out) + Na(+)(out). It carries out the reaction glycine(in) + Na(+)(in) = glycine(out) + Na(+)(out). The catalysed reaction is L-alanine(in) + Na(+)(in) = L-alanine(out) + Na(+)(out). It catalyses the reaction L-glutamine(in) + Na(+)(in) = L-glutamine(out) + Na(+)(out). In terms of biological role, synaptic vesicle transporter with apparent selectivity for neutral amino acids. The transport is sodium-coupled but chloride-independent, likely driven by the proton electrochemical gradient generated by vacuolar H(+)-ATPase in an overall electrogenic mechanism. May contribute to the synaptic uptake of neurotransmitter precursors in a process coupled in part to vesicle exocytosis. The chain is Sodium-dependent neutral amino acid transporter SLC6A17 from Homo sapiens (Human).